The sequence spans 239 residues: Exosome complex component Rrp41 (239 aa).

A disordered region spans residues 1–21 (MEERPERLISEDGLRLDGRKP).

The protein belongs to the RNase PH family. Rrp41 subfamily. Component of the archaeal exosome complex. Forms a hexameric ring-like arrangement composed of 3 Rrp41-Rrp42 heterodimers. The hexameric ring associates with a trimer of Rrp4 and/or Csl4 subunits.

Its subcellular location is the cytoplasm. Functionally, catalytic component of the exosome, which is a complex involved in RNA degradation. Has 3'-&gt;5' exoribonuclease activity. Can also synthesize heteromeric RNA-tails. The polypeptide is Exosome complex component Rrp41 (Methanopyrus kandleri (strain AV19 / DSM 6324 / JCM 9639 / NBRC 100938)).